The primary structure comprises 120 residues: Alanine racemase (120 aa).

The active-site Proton acceptor; specific for L-alanine is the tyrosine 24.

Belongs to the alanine racemase family. As to quaternary structure, homodimer. Requires pyridoxal 5'-phosphate as cofactor.

The enzyme catalyses L-alanine = D-alanine. Functionally, highly specific to D- and L-alanine and does not catalyze the racemization of other amino acids. The chain is Alanine racemase from Penaeus monodon (Giant tiger prawn).